The primary structure comprises 144 residues: Granulocyte-macrophage colony-stimulating factor (144 aa).

The N-terminal stretch at 1–17 is a signal peptide; it reads MWLQNLLLLGTVVCSFS. O-linked (GalNAc...) serine glycosylation is present at S24. O-linked (GalNAc...) threonine glycosylation is present at T27. N-linked (GlcNAc...) asparagine glycosylation is found at N44 and N54. Disulfide bonds link C71/C113 and C105/C138.

Belongs to the GM-CSF family. Monomer. The signaling GM-CSF receptor complex is a dodecamer of two head-to-head hexamers of two alpha, two beta, and two ligand subunits.

Its subcellular location is the secreted. Its function is as follows. Cytokine that stimulates the growth and differentiation of hematopoietic precursor cells from various lineages, including granulocytes, macrophages, eosinophils and erythrocytes. The sequence is that of Granulocyte-macrophage colony-stimulating factor (CSF2) from Cervus elaphus (Red deer).